A 370-amino-acid chain; its full sequence is Gibberellin 2-beta-dioxygenase 2 (370 aa).

The region spanning aspartate 186 to proline 306 is the Fe2OG dioxygenase domain. Tyrosine 196 provides a ligand contact to 2-oxoglutarate. The Fe cation site is built by histidine 224, aspartate 226, and histidine 287. Arginine 297 and serine 299 together coordinate 2-oxoglutarate.

This sequence belongs to the iron/ascorbate-dependent oxidoreductase family. GA2OX subfamily. Fe(2+) is required as a cofactor.

It catalyses the reaction gibberellin A1 + 2-oxoglutarate + O2 = gibberellin A8 + succinate + CO2. Its function is as follows. Catalyzes the 2-beta-hydroxylation of several biologically active gibberellins, leading to the homeostatic regulation of their endogenous level. Catabolism of gibberellins (GAs) plays a central role in plant development. The sequence is that of Gibberellin 2-beta-dioxygenase 2 from Oryza sativa subsp. japonica (Rice).